The following is a 318-amino-acid chain: 1-aminocyclopropane-1-carboxylate oxidase 1 (318 aa).

The Fe2OG dioxygenase domain occupies 153–254 (PTFGTKVSNY…RMSIASFYNP (102 aa)). His177, Asp179, and His234 together coordinate Fe cation.

Belongs to the iron/ascorbate-dependent oxidoreductase family. It depends on Fe cation as a cofactor. In terms of tissue distribution, fruit.

It catalyses the reaction 1-aminocyclopropane-1-carboxylate + L-ascorbate + O2 = ethene + L-dehydroascorbate + hydrogen cyanide + CO2 + 2 H2O. The protein operates within alkene biosynthesis; ethylene biosynthesis via S-adenosyl-L-methionine; ethylene from S-adenosyl-L-methionine: step 2/2. This chain is 1-aminocyclopropane-1-carboxylate oxidase 1 (ACO1), found in Cucumis melo (Muskmelon).